A 415-amino-acid chain; its full sequence is Serine hydroxymethyltransferase (415 aa).

(6S)-5,6,7,8-tetrahydrofolate-binding positions include leucine 117 and 121–123 (GHL). Lysine 225 is modified (N6-(pyridoxal phosphate)lysine). 349–351 (SPF) serves as a coordination point for (6S)-5,6,7,8-tetrahydrofolate.

Belongs to the SHMT family. In terms of assembly, homodimer. The cofactor is pyridoxal 5'-phosphate.

The protein resides in the cytoplasm. The catalysed reaction is (6R)-5,10-methylene-5,6,7,8-tetrahydrofolate + glycine + H2O = (6S)-5,6,7,8-tetrahydrofolate + L-serine. The protein operates within one-carbon metabolism; tetrahydrofolate interconversion. Its pathway is amino-acid biosynthesis; glycine biosynthesis; glycine from L-serine: step 1/1. In terms of biological role, catalyzes the reversible interconversion of serine and glycine with tetrahydrofolate (THF) serving as the one-carbon carrier. This reaction serves as the major source of one-carbon groups required for the biosynthesis of purines, thymidylate, methionine, and other important biomolecules. Also exhibits THF-independent aldolase activity toward beta-hydroxyamino acids, producing glycine and aldehydes, via a retro-aldol mechanism. The sequence is that of Serine hydroxymethyltransferase from Nitratiruptor sp. (strain SB155-2).